Reading from the N-terminus, the 260-residue chain is Hydroxyacylglutathione hydrolase (260 aa).

Histidine 61, histidine 63, aspartate 65, histidine 66, histidine 119, aspartate 138, and histidine 176 together coordinate Zn(2+).

It belongs to the metallo-beta-lactamase superfamily. Glyoxalase II family. In terms of assembly, monomer. Requires Zn(2+) as cofactor.

The catalysed reaction is an S-(2-hydroxyacyl)glutathione + H2O = a 2-hydroxy carboxylate + glutathione + H(+). It functions in the pathway secondary metabolite metabolism; methylglyoxal degradation; (R)-lactate from methylglyoxal: step 2/2. Its function is as follows. Thiolesterase that catalyzes the hydrolysis of S-D-lactoyl-glutathione to form glutathione and D-lactic acid. This Brucella anthropi (strain ATCC 49188 / DSM 6882 / CCUG 24695 / JCM 21032 / LMG 3331 / NBRC 15819 / NCTC 12168 / Alc 37) (Ochrobactrum anthropi) protein is Hydroxyacylglutathione hydrolase.